The following is a 605-amino-acid chain: F-box/WD repeat-containing protein pof1 (605 aa).

The F-box domain occupies 107–153; sequence LDFLSLLPVEISFRILSFLDARSLCQAAQVSKHWKELADDDVIWHRM. The span at 195-212 shows a compositional bias: basic and acidic residues; it reads GVDQAHESSPVKKAKLDD. The segment at 195–231 is disordered; the sequence is GVDQAHESSPVKKAKLDDYPTSSNEETISSVKPPSPN. Residues 214–231 show a composition bias toward polar residues; it reads PTSSNEETISSVKPPSPN. S229 and S232 each carry phosphoserine. WD repeat units follow at residues 271–299, 311–339, 350–379, 390–420, 432–460, 472–500, and 510–538; these read GHSDGVMCLQLVRNILASGSYDATIRLWN, GHSSGVTCLQFDQCKLISGSMDKTIRIWN, HGHTDSVLCLTFDSTLLVSGSADCTVKLWH, GHTGPVNSVRIIRDRGLVLSGSDDSTIKIWS, AHIGPVQSLALADSRLFSCSLDGTIKQWD, GHIEGVWEIAADHLRLISGAHDGVVKVWE, and NHSEPVTSVALGDCEVVSGSEDGKIYLWL.

As to quaternary structure, a part of the E3 ubiquitin ligase Skp1-Cullin-1-F-box (SCF) complex. Interacts with cul1, skp1 and phosphorylated zip1.

It localises to the nucleus. Its function is as follows. Probably recognizes and binds to some phosphorylated proteins and promotes their ubiquitination and degradation. Required for the inactivation of zip1 via ubiquitination. The chain is F-box/WD repeat-containing protein pof1 (pof1) from Schizosaccharomyces pombe (strain 972 / ATCC 24843) (Fission yeast).